Consider the following 364-residue polypeptide: Methylthioribose-1-phosphate isomerase (364 aa).

Residues 49 to 51 (RGA), arginine 89, and glutamine 201 contribute to the substrate site. Aspartate 242 serves as the catalytic Proton donor. 252 to 253 (NK) serves as a coordination point for substrate.

Belongs to the eIF-2B alpha/beta/delta subunits family. MtnA subfamily.

It catalyses the reaction 5-(methylsulfanyl)-alpha-D-ribose 1-phosphate = 5-(methylsulfanyl)-D-ribulose 1-phosphate. It functions in the pathway amino-acid biosynthesis; L-methionine biosynthesis via salvage pathway; L-methionine from S-methyl-5-thio-alpha-D-ribose 1-phosphate: step 1/6. In terms of biological role, catalyzes the interconversion of methylthioribose-1-phosphate (MTR-1-P) into methylthioribulose-1-phosphate (MTRu-1-P). This Leptospira interrogans serogroup Icterohaemorrhagiae serovar copenhageni (strain Fiocruz L1-130) protein is Methylthioribose-1-phosphate isomerase.